We begin with the raw amino-acid sequence, 484 residues long: Glutamate mutase epsilon subunit (484 aa).

Arg-66 provides a ligand contact to L-glutamate. Residue Gly-68 coordinates adenosylcob(III)alamin. Arg-100 contacts L-glutamate. Asn-123 lines the adenosylcob(III)alamin pocket. L-glutamate contacts are provided by residues 149–150 (RH), Glu-171, and Tyr-177. Residue Pro-180 coordinates adenosylcob(III)alamin. Residue Tyr-181 participates in L-glutamate binding. Adenosylcob(III)alamin contacts are provided by Phe-297, Lys-326, Glu-330, and Ile-334.

Belongs to the methylaspartate mutase GlmE subunit family. In terms of assembly, heterotetramer composed of 2 epsilon subunits (GlmE) and 2 sigma subunits (GlmS). GlmE exists as a homodimer and GlmS as a monomer. Requires adenosylcob(III)alamin as cofactor.

It catalyses the reaction (2S,3S)-3-methyl-L-aspartate = L-glutamate. It participates in amino-acid degradation; L-glutamate degradation via mesaconate pathway; acetate and pyruvate from L-glutamate: step 1/4. Its function is as follows. Catalyzes the carbon skeleton rearrangement of L-glutamate to L-threo-3-methylaspartate ((2S,3S)-3-methylaspartate). The sequence is that of Glutamate mutase epsilon subunit from Desulfitobacterium hafniense (strain Y51).